The sequence spans 113 residues: Gigasin-5 (113 aa).

In terms of tissue distribution, component of the organic matrix of calcified shell layers.

The chain is Gigasin-5 from Magallana gigas (Pacific oyster).